Reading from the N-terminus, the 168-residue chain is Dual-action ribosomal maturation protein DarP (168 aa).

This sequence belongs to the DarP family.

The protein resides in the cytoplasm. Member of a network of 50S ribosomal subunit biogenesis factors which assembles along the 30S-50S interface, preventing incorrect 23S rRNA structures from forming. Promotes peptidyl transferase center (PTC) maturation. This Neisseria meningitidis serogroup B (strain ATCC BAA-335 / MC58) protein is Dual-action ribosomal maturation protein DarP.